The sequence spans 61 residues: Large ribosomal subunit protein bL32 (61 aa).

A compositionally biased stretch (basic residues) spans 1–16 (MAVPKRKTSPSKRGMR). Residues 1 to 61 (MAVPKRKTSP…RSVLTPKNSG (61 aa)) form a disordered region. Basic and acidic residues predominate over residues 28–44 (VEDKDSGELRRPHHIDL).

It belongs to the bacterial ribosomal protein bL32 family.

This chain is Large ribosomal subunit protein bL32, found in Bartonella bacilliformis (strain ATCC 35685 / KC583 / Herrer 020/F12,63).